The chain runs to 279 residues: Zinc finger CCCH domain-containing protein 42 (279 aa).

The disordered stretch occupies residues S11–P77. Over residues S16–S39 the composition is skewed to low complexity. 3 C3H1-type zinc fingers span residues R79–K107, R120–D148, and R186–S214.

This chain is Zinc finger CCCH domain-containing protein 42, found in Oryza sativa subsp. japonica (Rice).